A 183-amino-acid chain; its full sequence is Streptavidin-V1 (183 aa).

The N-terminal stretch at 1–24 (MRKIVVAAIAVSLTTVSITASASA) is a signal peptide. The region spanning 37 to 159 (AEAGITGTWY…GHDTFTKVKP (123 aa)) is the Avidin-like domain. Y67 and Y78 together coordinate biotin. The short motif at 83 to 85 (RYD) is the Cell attachment site; atypical element. Biotin is bound by residues W116, W132, and W144.

It belongs to the avidin/streptavidin family. As to quaternary structure, homotetramer.

It is found in the secreted. Functionally, the biological function of streptavidin is not known. Forms a strong non-covalent specific complex with biotin (one molecule of biotin per subunit of streptavidin). In Streptomyces violaceus (Streptomyces venezuelae), this protein is Streptavidin-V1.